Here is a 457-residue protein sequence, read N- to C-terminus: Glycine receptor subunit alpha-1 (457 aa).

An N-terminal signal peptide occupies residues 1 to 28; that stretch reads MYSFNTLRLYLWETIVFFSLAASKEAEA. Over 29–250 the chain is Extracellular; that stretch reads ARSAPKPMSP…RFHLERQMGY (222 aa). Asn-66 carries an N-linked (GlcNAc...) asparagine glycan. The glycine site is built by Arg-93 and Ser-157. A disulfide bridge connects residues Cys-166 and Cys-180. Positions 220 and 222 each coordinate Zn(2+). A disulfide bridge links Cys-226 with Cys-237. A strychnine-binding site is contributed by 230–235; it reads YNTGKF. Thr-232 lines the glycine pocket. A Zn(2+)-binding site is contributed by His-243. The chain crosses the membrane as a helical span at residues 251 to 272; that stretch reads YLIQMYIPSLLIVILSWISFWI. The Cytoplasmic portion of the chain corresponds to 273-277; that stretch reads NMDAA. Residues 278-298 traverse the membrane as a helical segment; sequence PARVGLGITTVLTMTTQSSGS. Residues 299–309 lie on the Extracellular side of the membrane; it reads RASLPKVSYVK. The chain crosses the membrane as a helical span at residues 310 to 330; the sequence is AIDIWMAVCLLFVFSALLEYA. At 331-425 the chain is on the cytoplasmic side; the sequence is AVNFVSRQHK…FIQRAKKIDK (95 aa). The segment at 391–410 is disordered; that stretch reads KGANNSNTTNPPPAPSKSPE. The chain crosses the membrane as a helical span at residues 426–446; it reads ISRIGFPMAFLIFNMFYWIIY. The Extracellular segment spans residues 447-457; it reads KIVRREDVHNQ.

It belongs to the ligand-gated ion channel (TC 1.A.9) family. Glycine receptor (TC 1.A.9.3) subfamily. GLRA1 sub-subfamily. As to quaternary structure, interacts with GLRB to form heteropentameric channels; this is probably the predominant form in vivo. Heteropentamer composed of four GLRA1 subunits and one GLRB subunit. Heteropentamer composed of two GLRA1 and three GLRB. Heteropentamer composed of three GLRA1 and two GLRB. Homopentamer (in vitro). Both homopentamers and heteropentamers form functional ion channels, but their characteristics are subtly different.

Its subcellular location is the postsynaptic cell membrane. The protein resides in the synapse. It localises to the perikaryon. It is found in the cell projection. The protein localises to the dendrite. Its subcellular location is the cell membrane. The enzyme catalyses chloride(in) = chloride(out). Channel opening is triggered by extracellular glycine. Channel characteristics depend on the subunit composition; heteropentameric channels are activated by lower glycine levels and display faster desensitization. Channel opening is also triggered by taurine and beta-alanine. Channel activity is potentiated by nanomolar concentrations of Zn(2+); half-maximal activation is observed with 37 nM Zn(2+). Inhibited by higher Zn(2+) levels; haf-maximal inhibition occurs at 20 uM Zn(2+). Inhibited by strychnine. Strychnine binding locks the channel in a closed conformation and prevents channel opening in response to extracellular glycine. Inhibited by lindane. Inhibited by picrotoxin. In terms of biological role, subunit of heteromeric glycine-gated chloride channels. Plays an important role in the down-regulation of neuronal excitability. Contributes to the generation of inhibitory postsynaptic currents. Channel activity is potentiated by ethanol. Potentiation of channel activity by intoxicating levels of ethanol contribute to the sedative effects of ethanol. The protein is Glycine receptor subunit alpha-1 (GLRA1) of Homo sapiens (Human).